Reading from the N-terminus, the 246-residue chain is DNA repair protein RecO (246 aa).

It belongs to the RecO family.

In terms of biological role, involved in DNA repair and RecF pathway recombination. The polypeptide is DNA repair protein RecO (Methylorubrum populi (strain ATCC BAA-705 / NCIMB 13946 / BJ001) (Methylobacterium populi)).